A 153-amino-acid chain; its full sequence is Conglutin delta 2 (153 aa).

The signal sequence occupies residues 1–22; that stretch reads MAKLTILIALVAALVLVVHTSA. Cystine bridges form between cysteine 30–cysteine 102, cysteine 42–cysteine 90, cysteine 91–cysteine 138, and cysteine 104–cysteine 146.

It belongs to the 2S seed storage albumins family. As to quaternary structure, heterodimer of a small chain and a large chain; disulfide-linked. In terms of tissue distribution, expressed in developing cotyledons (at protein level).

It localises to the endoplasmic reticulum. This Lupinus angustifolius (Narrow-leaved blue lupine) protein is Conglutin delta 2.